The following is a 236-amino-acid chain: (5-formylfuran-3-yl)methyl phosphate synthase (236 aa).

Lysine 27 (schiff-base intermediate with substrate) is an active-site residue. Lysine 85 serves as the catalytic Proton acceptor.

This sequence belongs to the MfnB family.

The catalysed reaction is 2 D-glyceraldehyde 3-phosphate = 4-(hydroxymethyl)-2-furancarboxaldehyde phosphate + phosphate + 2 H2O. It participates in cofactor biosynthesis; methanofuran biosynthesis. Functionally, catalyzes the formation of 4-(hydroxymethyl)-2-furancarboxaldehyde phosphate (4-HFC-P) from two molecules of glyceraldehyde-3-P (GA-3-P). This Methanococcus maripaludis (strain C5 / ATCC BAA-1333) protein is (5-formylfuran-3-yl)methyl phosphate synthase.